The following is a 669-amino-acid chain: Glutamate--cysteine ligase (669 aa).

Belongs to the glutamate--cysteine ligase type 3 family. As to quaternary structure, heterodimer of a catalytic heavy chain and a regulatory light chain.

It catalyses the reaction L-cysteine + L-glutamate + ATP = gamma-L-glutamyl-L-cysteine + ADP + phosphate + H(+). The protein operates within sulfur metabolism; glutathione biosynthesis; glutathione from L-cysteine and L-glutamate: step 1/2. Catalyzes the ATP-dependent ligation of L-glutamate and L-cysteine and participates in the first and rate-limiting step in glutathione biosynthesis. This is Glutamate--cysteine ligase (gcs1) from Schizosaccharomyces pombe (strain 972 / ATCC 24843) (Fission yeast).